The primary structure comprises 225 residues: PKHD-type hydroxylase YbiX (225 aa).

Residues 78 to 177 (TLSTPLFNRY…RVASFMWIQS (100 aa)) enclose the Fe2OG dioxygenase domain. The Fe cation site is built by His-96, Asp-98, and His-158. Arg-168 lines the 2-oxoglutarate pocket.

Fe(2+) is required as a cofactor. L-ascorbate serves as cofactor.

This Escherichia coli O8 (strain IAI1) protein is PKHD-type hydroxylase YbiX.